Here is a 664-residue protein sequence, read N- to C-terminus: UvrABC system protein B (664 aa).

Residues 25–412 form the Helicase ATP-binding domain; that stretch reads KGLVSGLTDQ…LQVVEQLVRP (388 aa). An ATP-binding site is contributed by 38-45; that stretch reads GVTGSGKT. Positions 91 to 114 match the Beta-hairpin motif; sequence YYDYYQPEAYVPQKDMYIEKDSDI. In terms of domain architecture, Helicase C-terminal spans 428–594; it reads QIDDLLEEVK…GIRKAIKDIN (167 aa). Positions 620-655 constitute a UVR domain; the sequence is ARLIKELESQMKKAAKNLEFERAALIRDRVVELRAA.

This sequence belongs to the UvrB family. In terms of assembly, forms a heterotetramer with UvrA during the search for lesions. Interacts with UvrC in an incision complex.

It localises to the cytoplasm. Functionally, the UvrABC repair system catalyzes the recognition and processing of DNA lesions. A damage recognition complex composed of 2 UvrA and 2 UvrB subunits scans DNA for abnormalities. Upon binding of the UvrA(2)B(2) complex to a putative damaged site, the DNA wraps around one UvrB monomer. DNA wrap is dependent on ATP binding by UvrB and probably causes local melting of the DNA helix, facilitating insertion of UvrB beta-hairpin between the DNA strands. Then UvrB probes one DNA strand for the presence of a lesion. If a lesion is found the UvrA subunits dissociate and the UvrB-DNA preincision complex is formed. This complex is subsequently bound by UvrC and the second UvrB is released. If no lesion is found, the DNA wraps around the other UvrB subunit that will check the other stand for damage. This Dehalococcoides mccartyi (strain CBDB1) protein is UvrABC system protein B.